Here is a 177-residue protein sequence, read N- to C-terminus: Endoribonuclease YbeY (177 aa).

The Zn(2+) site is built by His118, His122, and His128.

The protein belongs to the endoribonuclease YbeY family. Zn(2+) is required as a cofactor.

The protein resides in the cytoplasm. Functionally, single strand-specific metallo-endoribonuclease involved in late-stage 70S ribosome quality control and in maturation of the 3' terminus of the 16S rRNA. The polypeptide is Endoribonuclease YbeY (Mycobacterium bovis (strain ATCC BAA-935 / AF2122/97)).